The chain runs to 392 residues: HORMA domain-containing protein 1 (392 aa).

In terms of domain architecture, HORMA spans histidine 25–valine 227. A disordered region spans residues serine 323–arginine 359. Over residues lysine 341–serine 353 the composition is skewed to polar residues. Residue serine 375 is modified to Phosphoserine. Residues lysine 381 to arginine 384 carry the Nuclear localization signal motif.

In terms of assembly, interacts with HORMAD2. Interacts with IHO1. Phosphorylated at Ser-375 in a SPO11-dependent manner. Specifically expressed in meiotic germ cells.

It localises to the nucleus. The protein resides in the chromosome. Its subcellular location is the cytoplasm. In terms of biological role, plays a key role in meiotic progression. Regulates 3 different functions during meiosis: ensures that sufficient numbers of processed DNA double-strand breaks (DSBs) are available for successful homology search by increasing the steady-state numbers of single-stranded DSB ends. Promotes synaptonemal-complex formation independently of its role in homology search. Plays a key role in the male mid-pachytene checkpoint and the female meiotic prophase checkpoint: required for efficient build-up of ATR activity on unsynapsed chromosome regions, a process believed to form the basis of meiotic silencing of unsynapsed chromatin (MSUC) and meiotic prophase quality control in both sexes. In Mus musculus (Mouse), this protein is HORMA domain-containing protein 1.